A 216-amino-acid chain; its full sequence is Flavin-dependent thymidylate synthase (216 aa).

In terms of domain architecture, ThyX spans 9–206; the sequence is GFVELVDVMG…PWTYEAFIKY (198 aa). Residues Ser55, 78-80, and Glu86 each bind FAD; that span reads RHR. DUMP is bound by residues 75 to 78, 86 to 90, and Arg145; these read QWFR and ELSGR. Positions 78-88 match the ThyX motif motif; it reads RHRIASYNELS. FAD-binding positions include 161 to 163 and Asn167; that span reads NAR. Residue Arg172 participates in dUMP binding. The active-site Involved in ionization of N3 of dUMP, leading to its activation is the Arg172.

It belongs to the thymidylate synthase ThyX family. In terms of assembly, homotetramer. The cofactor is FAD.

It carries out the reaction dUMP + (6R)-5,10-methylene-5,6,7,8-tetrahydrofolate + NADPH + H(+) = dTMP + (6S)-5,6,7,8-tetrahydrofolate + NADP(+). Its pathway is pyrimidine metabolism; dTTP biosynthesis. Its function is as follows. Catalyzes the reductive methylation of 2'-deoxyuridine-5'-monophosphate (dUMP) to 2'-deoxythymidine-5'-monophosphate (dTMP) while utilizing 5,10-methylenetetrahydrofolate (mTHF) as the methyl donor, and NADPH and FADH(2) as the reductant. The chain is Flavin-dependent thymidylate synthase from Thermotoga neapolitana (strain ATCC 49049 / DSM 4359 / NBRC 107923 / NS-E).